Here is a 530-residue protein sequence, read N- to C-terminus: Probable histone-arginine methyltransferase CARMER (530 aa).

Positions 141-450 (ASQYFQFYGY…QSYDVTIDLH (310 aa)) constitute an SAM-dependent MTase PRMT-type domain. S-adenosyl-L-methionine contacts are provided by Gln154, Arg163, Gly187, Glu209, Glu238, and Thr266. Asymmetric dimethylarginine; by autocatalysis is present on Arg501.

The protein belongs to the class I-like SAM-binding methyltransferase superfamily. Protein arginine N-methyltransferase family. Homodimer. Interacts with EcR. In terms of processing, the dimethylated protein is the major form. In terms of tissue distribution, present ubiquitously (at protein level). Expressed in the imaginal disks and in larval brains, and to a much lesser degree in the polytene larval tissue such as salivary glands.

It localises to the cytoplasm. It is found in the nucleus. The catalysed reaction is L-arginyl-[protein] + 2 S-adenosyl-L-methionine = N(omega),N(omega)-dimethyl-L-arginyl-[protein] + 2 S-adenosyl-L-homocysteine + 2 H(+). Its function is as follows. Methylates (mono- and asymmetric dimethylation) the guanidino nitrogens of arginyl residues in proteins. May methylate histone H3 at 'Arg-17' and activate transcription via chromatin remodeling. Coordinates ecdysone-mediated expression of cell death genes. This Drosophila melanogaster (Fruit fly) protein is Probable histone-arginine methyltransferase CARMER (Art4).